A 548-amino-acid polypeptide reads, in one-letter code: MNKRAMLGAIGLAFGLLAAPIGASAKGESIVWNEQWKTPSFVSGSLLNGGEQALEELVYQYVDRENGTFRLGGRARDRLALIGKQTDELGHTVMRFEQRHHGIPVYGTMLAAHVKDGELIALSGSLIPNLDGQPRLKKAKTVTVQQAEAIAEQDVTETVTKERPTTENGERTRLVIYPTDGTARLAYEVNVRFLTPVPGNWVYIIDATDGAILNKFNQIDSRQPGGGQPVAGASTVGVGRGVLGDQKYINTTYSSYYGYYYLQDNTRGSGIFTYDGRNRTVLPGSLWTDGDNQFTASYDAAAVDAHYYAGVVYDYYKNVHGRLSYDGSNAAIRSTVHYGRGYNNAFWNGSQMVYGDGDGQTFLPFSGGIDVVGHELTHAVTDYTAGLVYQNESGAINEAMSDIFGTLVEFYANRNPDWEIGEDIYTPGVAGDALRSMSDPAKYGDPDHYSKRYTGTQDNGGVHTNSGIINKAAYLLSQGGVHYGVSVNGIGRDKMGKIFYRALVYYLTPTSNFSQLRAACVQAAADLYGSTSQEVNSVKQAFNAVGVY.

An N-terminal signal peptide occupies residues 1-25 (MNKRAMLGAIGLAFGLLAAPIGASA). Residues 26-229 (KGESIVWNEQ…DSRQPGGGQP (204 aa)) constitute a propeptide, activation peptide. Asp-289, Asp-291, Gln-293, and Asp-370 together coordinate Ca(2+). His-374 provides a ligand contact to Zn(2+). The active site involves Glu-375. Zn(2+)-binding residues include His-378 and Glu-398. The Ca(2+) site is built by Glu-409, Asn-415, Asp-417, Glu-419, Glu-422, Tyr-425, Thr-426, Val-429, and Asp-432. The Proton donor role is filled by His-463.

The protein belongs to the peptidase M4 family. The cofactor is Ca(2+). Zn(2+) is required as a cofactor.

The protein localises to the secreted. Its casein hydrolytic activity is inhibited almost completely by a chelating agent (EDTA), whereas neither diisopropyl fluorophosphate nor phenylmethylsulfonyl fluoride inhibit the proteolytic activity in vitro. Functionally, extracellular zinc metalloprotease. This chain is Thermostable neutral protease NprT (nprT), found in Geobacillus stearothermophilus (Bacillus stearothermophilus).